The sequence spans 226 residues: Putative N-acetylmannosamine-6-phosphate 2-epimerase 1 (226 aa).

This sequence belongs to the NanE family.

It catalyses the reaction an N-acyl-D-glucosamine 6-phosphate = an N-acyl-D-mannosamine 6-phosphate. Its pathway is amino-sugar metabolism; N-acetylneuraminate degradation; D-fructose 6-phosphate from N-acetylneuraminate: step 3/5. Functionally, converts N-acetylmannosamine-6-phosphate (ManNAc-6-P) to N-acetylglucosamine-6-phosphate (GlcNAc-6-P). The chain is Putative N-acetylmannosamine-6-phosphate 2-epimerase 1 (nanE1) from Salmonella typhimurium (strain LT2 / SGSC1412 / ATCC 700720).